The chain runs to 140 residues: MNIAQVAKQFGLTAATLRYYERVGLIPPVKRKDSGIRDYDEEDIKWIEFIKCMRNAGLSIEALIEYTTLFTEGDRTVEARKNILADERQRLIEKRKEIDETIKRLDTKIKDYDGKLRENEAKLKSRPKTESLHGSVEQRR.

The region spanning 1–69 is the HTH merR-type domain; that stretch reads MNIAQVAKQF…IEALIEYTTL (69 aa). The H-T-H motif DNA-binding region spans 3–22; sequence IAQVAKQFGLTAATLRYYER. A coiled-coil region spans residues 75 to 125; that stretch reads RTVEARKNILADERQRLIEKRKEIDETIKRLDTKIKDYDGKLRENEAKLKS. The tract at residues 120 to 140 is disordered; it reads EAKLKSRPKTESLHGSVEQRR.

Transcriptional regulator involved in the response to aldehyde stress. Binds to the promoter region of the adhA-yraA operon, the yraC and its own promoter region; binding is unchanged in the presence of aldehydes. The protein is HTH-type transcriptional regulator AdhR (adhR) of Bacillus subtilis (strain 168).